Consider the following 308-residue polypeptide: MNYSLKQLKVFVTVAQEKSFSRAGERIGLSQSAVSHSVKELENHTGVRLLDRTTREVVLTDAGQQLALRLERLLDELNSTLRDTGRMGQQLSGKVRVAASQTISAHLIPQCIAESHRRYPDIQFVLHDRPQQWVMESIRQGDVDFGIVIDPGPVGDLQCEAILSEPFFLLCHRDSALAVEDYVPWQALQGAKLVLQDYASGSRPLIDAALARNGIQANIVQEIGHPATLFPMVAAGIGISILPALALPLPEGSPLVVKRITPVVERQLMLVRRKNRSLSTAAEALWDVVRDQGNALMAGREGDPLYQI.

Positions 1–60 (MNYSLKQLKVFVTVAQEKSFSRAGERIGLSQSAVSHSVKELENHTGVRLLDRTTREVVLT) constitute an HTH lysR-type domain. The H-T-H motif DNA-binding region spans 20 to 39 (FSRAGERIGLSQSAVSHSVK).

It belongs to the LysR transcriptional regulatory family.

This is an uncharacterized protein from Shigella flexneri.